Here is a 41-residue protein sequence, read N- to C-terminus: Large ribosomal subunit protein bL32c (41 aa).

The protein belongs to the bacterial ribosomal protein bL32 family.

Its subcellular location is the plastid. This chain is Large ribosomal subunit protein bL32c (rpl32), found in Helicosporidium sp. subsp. Simulium jonesii (Green alga).